A 417-amino-acid chain; its full sequence is Gamma-glutamyl phosphate reductase (417 aa).

This sequence belongs to the gamma-glutamyl phosphate reductase family.

The protein resides in the cytoplasm. The enzyme catalyses L-glutamate 5-semialdehyde + phosphate + NADP(+) = L-glutamyl 5-phosphate + NADPH + H(+). The protein operates within amino-acid biosynthesis; L-proline biosynthesis; L-glutamate 5-semialdehyde from L-glutamate: step 2/2. Functionally, catalyzes the NADPH-dependent reduction of L-glutamate 5-phosphate into L-glutamate 5-semialdehyde and phosphate. The product spontaneously undergoes cyclization to form 1-pyrroline-5-carboxylate. The chain is Gamma-glutamyl phosphate reductase from Haemophilus influenzae (strain ATCC 51907 / DSM 11121 / KW20 / Rd).